A 784-amino-acid polypeptide reads, in one-letter code: MKKRIPTLLATMIATALYSQQGLAADLASQCMLGVPSYDRPLVQGDTNDLPVTINADHAKGDYPDDAVFTGSVDIMQGNSRLQADEVQLHQKEAPGQPEPVRTVDALGNVHYDDNQVILKGPKGWANLNTKDTNVWEGDYQMVGRQGRGKADLMKQRGENRYTILDNGSFTSCLPGSDTWSVVGSEIIHDREEQVAEIWNARFKVGPVPIFYSPYLQLPVGDKRRSGFLIPNAKYTTTNYFEFYLPYYWNIAANMDATITPHYMHRRGNIMWENEFRYLSQAGAGLMELDYLPSDKVYKDEHPNDDSSRRWLFYWQHSGVMDQVWRFNVDYTKVSDPSYFNDFDNKYGSSTDGYATQKFSVGYAVQNFNATVSTKQFQVFSEQNTSSYSAEPQLDVNYYQNDVGPFDTRIYGQAVHFVNTRDDMPEATRVHLEPTINLPLSNNWGSINTEAKLLATHYQQTNLDWYNSRNTTKLDESVNRVMPQFKVDGKMVFERDMEMLAPGYTQTLEPRAQYLYVPYRDQSDIYNYDSSLLQSDYSGLFRGRTYGGLDRIASANQVTTGVTSRIYDDAAVERFNISVGQIYYFTESRTGDDNITWENDDKTGSLVWAGDTYWRISERWGLRGGIQYDTRLDNVATSNSSIEYRRDEDRLVQLNYRYASPEYIQATLPKYYSTAEQYKNGISQVGAVASWPIADRWSIVGAYYYDTNANKQADSMLGVQYSSCCYAIRVGYERKPNGWDNDKQHAVYDNAIGFNIELRGLSSNYGLGTQEMLRSNILPYQNTL.

A signal peptide spans 1–24; that stretch reads MKKRIPTLLATMIATALYSQQGLA. Cystine bridges form between Cys31/Cys724 and Cys173/Cys725.

This sequence belongs to the LptD family. Component of the lipopolysaccharide transport and assembly complex. Interacts with LptE and LptA. Post-translationally, contains two intramolecular disulfide bonds.

The protein localises to the cell outer membrane. Functionally, together with LptE, is involved in the assembly of lipopolysaccharide (LPS) at the surface of the outer membrane. The sequence is that of LPS-assembly protein LptD from Shigella dysenteriae serotype 1 (strain Sd197).